The primary structure comprises 511 residues: Phosphoenolpyruvate carboxylase (511 aa).

The protein belongs to the PEPCase type 2 family. In terms of assembly, homotetramer. Requires Mg(2+) as cofactor.

The enzyme catalyses oxaloacetate + phosphate = phosphoenolpyruvate + hydrogencarbonate. With respect to regulation, allosterically inhibited by L-aspartate and L-malate. PEPC activity is not affected by allosteric activators of E.coli PEPC such as glucose 6-phosphate, fructose 1,6-bisphosphate, and acetyl coenzyme A. In terms of biological role, catalyzes the irreversible beta-carboxylation of phosphoenolpyruvate (PEP) to form oxaloacetate (OAA), a four-carbon dicarboxylic acid source for the tricarboxylic acid cycle. This chain is Phosphoenolpyruvate carboxylase, found in Saccharolobus solfataricus (strain ATCC 35092 / DSM 1617 / JCM 11322 / P2) (Sulfolobus solfataricus).